The sequence spans 318 residues: Methionyl-tRNA formyltransferase (318 aa).

112–115 is a (6S)-5,6,7,8-tetrahydrofolate binding site; that stretch reads SILP.

The protein belongs to the Fmt family.

It carries out the reaction L-methionyl-tRNA(fMet) + (6R)-10-formyltetrahydrofolate = N-formyl-L-methionyl-tRNA(fMet) + (6S)-5,6,7,8-tetrahydrofolate + H(+). Attaches a formyl group to the free amino group of methionyl-tRNA(fMet). The formyl group appears to play a dual role in the initiator identity of N-formylmethionyl-tRNA by promoting its recognition by IF2 and preventing the misappropriation of this tRNA by the elongation apparatus. This Shewanella sp. (strain MR-4) protein is Methionyl-tRNA formyltransferase.